An 842-amino-acid polypeptide reads, in one-letter code: Elongation factor 2 (842 aa).

Positions 17-346 constitute a tr-type G domain; it reads TNVRNMSVIA…MIVMHLPSPV (330 aa). Residues 26–33, 158–161, and 213–215 each bind GTP; these read AHVDHGKS, NKVD, and SGL. His-699 is modified (diphthamide).

Belongs to the TRAFAC class translation factor GTPase superfamily. Classic translation factor GTPase family. EF-G/EF-2 subfamily.

The protein resides in the cytoplasm. The enzyme catalyses GTP + H2O = GDP + phosphate + H(+). In terms of biological role, catalyzes the GTP-dependent ribosomal translocation step during translation elongation. During this step, the ribosome changes from the pre-translocational (PRE) to the post-translocational (POST) state as the newly formed A-site-bound peptidyl-tRNA and P-site-bound deacylated tRNA move to the P and E sites, respectively. Catalyzes the coordinated movement of the two tRNA molecules, the mRNA and conformational changes in the ribosome. The sequence is that of Elongation factor 2 (EFT1) from Candida glabrata (strain ATCC 2001 / BCRC 20586 / JCM 3761 / NBRC 0622 / NRRL Y-65 / CBS 138) (Yeast).